Reading from the N-terminus, the 965-residue chain is Calsyntenin-2 (965 aa).

An N-terminal signal peptide occupies residues 1-20; it reads MLPGRLCLVPLLLALGVGSG. The Extracellular segment spans residues 21 to 835; the sequence is GGSGDGGDSR…SIQRSSVVPS (815 aa). 2 Cadherin domains span residues 46–162 and 163–282; these read IETS…APTF and KEPA…MPLF. N-linked (GlcNAc...) asparagine glycosylation is found at N58 and N100. 4 N-linked (GlcNAc...) asparagine glycosylation sites follow: N344, N376, N720, and N733. A helical membrane pass occupies residues 836-856; it reads IATVVIIISVCMLVFVVAMGV. The Cytoplasmic segment spans residues 857 to 965; sequence YRVRIAHQHF…NTAGVINIWK (109 aa). Residues 891–965 form a disordered region; sequence PMEKHEGPGH…NTAGVINIWK (75 aa). Residues 892–902 are compositionally biased toward basic and acidic residues; that stretch reads MEKHEGPGHGE. Over residues 903-915 the composition is skewed to acidic residues; it reads DETEGEEEEEAEE. The segment covering 942–959 has biased composition (polar residues); sequence QSGTSSQRPERSTWNTAG.

Belongs to the calsyntenin family. Post-translationally, proteolytically processed under normal cellular conditions. A primary zeta-cleavage generates a large extracellular (soluble) N-terminal domain (sAlc) and a short C-terminal transmembrane fragment (CTF1). A secondary cleavage catalyzed by gamma-secretase within the transmembrane domain releases the beta-Alc-gamma chain in the extracellular milieu and produces an intracellular fragment (AlcICD). This processing is strongly suppressed in the tripartite complex formed with APBA2 and APP, which seems to prevent the association with PSEN1.

The protein localises to the postsynaptic cell membrane. It is found in the endoplasmic reticulum membrane. Its subcellular location is the golgi apparatus membrane. The protein resides in the cell projection. It localises to the dendrite. Postsynaptic adhesion molecule that binds to presynaptic neurexins to mediate synapse formation, and which is involved in learning and memory. Promotes synapse development by acting as a cell adhesion molecule at the postsynaptic membrane, which associates with neurexin-alpha at the presynaptic membrane. The protein is Calsyntenin-2 of Rattus norvegicus (Rat).